Consider the following 452-residue polypeptide: tRNA modification GTPase MnmE (452 aa).

Residues Arg21, Glu82, and Arg121 each coordinate (6S)-5-formyl-5,6,7,8-tetrahydrofolate. The region spanning 217–373 is the TrmE-type G domain; the sequence is GINTTIIGKP…LENKIIEMFN (157 aa). K(+) is bound at residue Asn227. GTP contacts are provided by residues 227-232, 246-252, and 271-274; these read NVGKSS, TDIPGTT, and DTAG. Ser231 is a Mg(2+) binding site. The K(+) site is built by Thr246, Ile248, and Thr251. Thr252 is a Mg(2+) binding site. Position 452 (Lys452) interacts with (6S)-5-formyl-5,6,7,8-tetrahydrofolate.

The protein belongs to the TRAFAC class TrmE-Era-EngA-EngB-Septin-like GTPase superfamily. TrmE GTPase family. As to quaternary structure, homodimer. Heterotetramer of two MnmE and two MnmG subunits. Requires K(+) as cofactor.

The protein localises to the cytoplasm. Functionally, exhibits a very high intrinsic GTPase hydrolysis rate. Involved in the addition of a carboxymethylaminomethyl (cmnm) group at the wobble position (U34) of certain tRNAs, forming tRNA-cmnm(5)s(2)U34. In Finegoldia magna (strain ATCC 29328 / DSM 20472 / WAL 2508) (Peptostreptococcus magnus), this protein is tRNA modification GTPase MnmE.